A 338-amino-acid chain; its full sequence is Ferredoxin--NADP reductase (338 aa).

8 residues coordinate FAD: T14, D33, Q41, Y46, V86, F120, D284, and T325.

The protein belongs to the ferredoxin--NADP reductase type 2 family. Homodimer. FAD is required as a cofactor.

It catalyses the reaction 2 reduced [2Fe-2S]-[ferredoxin] + NADP(+) + H(+) = 2 oxidized [2Fe-2S]-[ferredoxin] + NADPH. This is Ferredoxin--NADP reductase from Pelagibacter ubique (strain HTCC1062).